A 322-amino-acid polypeptide reads, in one-letter code: UDP-N-acetylenolpyruvoylglucosamine reductase (322 aa).

An FAD-binding PCMH-type domain is found at 36-202 (RAGGPAQVLF…TSVLFEGVPG (167 aa)). The active site involves arginine 182. Catalysis depends on serine 231, which acts as the Proton donor. Glutamate 301 is an active-site residue.

It belongs to the MurB family. FAD is required as a cofactor.

It is found in the cytoplasm. The enzyme catalyses UDP-N-acetyl-alpha-D-muramate + NADP(+) = UDP-N-acetyl-3-O-(1-carboxyvinyl)-alpha-D-glucosamine + NADPH + H(+). It participates in cell wall biogenesis; peptidoglycan biosynthesis. Functionally, cell wall formation. This Brucella melitensis biotype 2 (strain ATCC 23457) protein is UDP-N-acetylenolpyruvoylglucosamine reductase.